Here is a 174-residue protein sequence, read N- to C-terminus: MLDREGYRPNVGIILINERNEVFWGKRVREHSWQFPQGGIKPGESPETAMYRELYEEVGLLPQHVKIVGRTRDWLRYDVPNNWVRREWRGSYRGQKQIWYLLRLTGRDCDVNLRATRHPEFDGWRWHQYWAPVDEVIDFKRDVYLEALKELSSRFLRGMESYEDFAARQPSGNR.

In terms of domain architecture, Nudix hydrolase spans 6-149 (GYRPNVGIIL…KRDVYLEALK (144 aa)). Residues 38-59 (GGIKPGESPETAMYRELYEEVG) carry the Nudix box motif.

The protein belongs to the Nudix hydrolase family. RppH subfamily. The cofactor is a divalent metal cation.

Its function is as follows. Accelerates the degradation of transcripts by removing pyrophosphate from the 5'-end of triphosphorylated RNA, leading to a more labile monophosphorylated state that can stimulate subsequent ribonuclease cleavage. The chain is RNA pyrophosphohydrolase from Neisseria gonorrhoeae (strain ATCC 700825 / FA 1090).